We begin with the raw amino-acid sequence, 199 residues long: NADH-quinone oxidoreductase subunit C (199 aa).

Belongs to the complex I 30 kDa subunit family. As to quaternary structure, NDH-1 is composed of 14 different subunits. Subunits NuoB, C, D, E, F, and G constitute the peripheral sector of the complex.

It localises to the cell membrane. The enzyme catalyses a quinone + NADH + 5 H(+)(in) = a quinol + NAD(+) + 4 H(+)(out). NDH-1 shuttles electrons from NADH, via FMN and iron-sulfur (Fe-S) centers, to quinones in the respiratory chain. The immediate electron acceptor for the enzyme in this species is believed to be ubiquinone. Couples the redox reaction to proton translocation (for every two electrons transferred, four hydrogen ions are translocated across the cytoplasmic membrane), and thus conserves the redox energy in a proton gradient. The protein is NADH-quinone oxidoreductase subunit C of Polynucleobacter asymbioticus (strain DSM 18221 / CIP 109841 / QLW-P1DMWA-1) (Polynucleobacter necessarius subsp. asymbioticus).